A 391-amino-acid polypeptide reads, in one-letter code: Ectodysplasin-A (391 aa).

Over residues 1-21 (MGYPEVERREPLPAAAPRERG) the composition is skewed to basic and acidic residues. The tract at residues 1–28 (MGYPEVERREPLPAAAPRERGSQGCGCR) is disordered. Residues 1 to 41 (MGYPEVERREPLPAAAPRERGSQGCGCRGAPARAGEGNSCR) lie on the Cytoplasmic side of the membrane. A helical; Signal-anchor for type II membrane protein membrane pass occupies residues 42 to 62 (LFLGFFGLSLALHLLTLCCYL). At 63-391 (ELRSELRRER…AIRLGEAPAS (329 aa)) the chain is on the extracellular side. Disordered regions lie at residues 73–130 (GAES…SQDG) and 145–245 (SYSE…GTRE). The segment covering 76–96 (SRFSGPGTPGTSGTLSSPGGL) has biased composition (low complexity). In terms of domain architecture, Collagen-like spans 180 to 229 (GPPGPNGPPGPPGPPGPQGPPGIPGIPGIPGTTVMGPPGPPGPPGPQGPP). 2 stretches are compositionally biased toward pro residues: residues 181-203 (PPGP…PGIP) and 216-228 (PPGP…PQGP). The THD domain occupies 249-385 (AVVHLQGQGS…HTTFFGAIRL (137 aa)). Asn313 carries N-linked (GlcNAc...) asparagine glycosylation. A disulfide bond links Cys332 and Cys346. Asn372 is a glycosylation site (N-linked (GlcNAc...) asparagine).

The protein belongs to the tumor necrosis factor family. In terms of assembly, homotrimer. The homotrimers may then dimerize and form higher-order oligomers. In terms of processing, N-glycosylated. Post-translationally, processing by furin produces a secreted form.

The protein resides in the cell membrane. It is found in the secreted. Functionally, cytokine which is involved in epithelial-mesenchymal signaling during morphogenesis of ectodermal organs. Functions as a ligand activating the DEATH-domain containing receptors EDAR and EDA2R. Isoform A1 binds only to the receptor EDAR, while isoform A2 binds exclusively to the receptor EDA2R. May also play a role in cell adhesion. Isoform A1 binds only to the receptor EDAR, while isoform A2 binds exclusively to the receptor EDA2R. Its function is as follows. Isoform A2 binds exclusively to the receptor EDA2R. This Bos taurus (Bovine) protein is Ectodysplasin-A (EDA).